Here is a 290-residue protein sequence, read N- to C-terminus: 4-hydroxy-3-methylbut-2-enyl diphosphate reductase (290 aa).

[4Fe-4S] cluster is bound at residue C12. (2E)-4-hydroxy-3-methylbut-2-enyl diphosphate contacts are provided by H50 and H83. Dimethylallyl diphosphate contacts are provided by H50 and H83. Residues H50 and H83 each contribute to the isopentenyl diphosphate site. C105 is a [4Fe-4S] cluster binding site. H133 serves as a coordination point for (2E)-4-hydroxy-3-methylbut-2-enyl diphosphate. H133 is a binding site for dimethylallyl diphosphate. Residue H133 coordinates isopentenyl diphosphate. E135 serves as the catalytic Proton donor. T173 contacts (2E)-4-hydroxy-3-methylbut-2-enyl diphosphate. Position 202 (C202) interacts with [4Fe-4S] cluster. S230, N232, and S274 together coordinate (2E)-4-hydroxy-3-methylbut-2-enyl diphosphate. Residues S230, N232, and S274 each coordinate dimethylallyl diphosphate. The isopentenyl diphosphate site is built by S230, N232, and S274.

The protein belongs to the IspH family. [4Fe-4S] cluster serves as cofactor.

It catalyses the reaction isopentenyl diphosphate + 2 oxidized [2Fe-2S]-[ferredoxin] + H2O = (2E)-4-hydroxy-3-methylbut-2-enyl diphosphate + 2 reduced [2Fe-2S]-[ferredoxin] + 2 H(+). The enzyme catalyses dimethylallyl diphosphate + 2 oxidized [2Fe-2S]-[ferredoxin] + H2O = (2E)-4-hydroxy-3-methylbut-2-enyl diphosphate + 2 reduced [2Fe-2S]-[ferredoxin] + 2 H(+). Its pathway is isoprenoid biosynthesis; dimethylallyl diphosphate biosynthesis; dimethylallyl diphosphate from (2E)-4-hydroxy-3-methylbutenyl diphosphate: step 1/1. The protein operates within isoprenoid biosynthesis; isopentenyl diphosphate biosynthesis via DXP pathway; isopentenyl diphosphate from 1-deoxy-D-xylulose 5-phosphate: step 6/6. Functionally, catalyzes the conversion of 1-hydroxy-2-methyl-2-(E)-butenyl 4-diphosphate (HMBPP) into a mixture of isopentenyl diphosphate (IPP) and dimethylallyl diphosphate (DMAPP). Acts in the terminal step of the DOXP/MEP pathway for isoprenoid precursor biosynthesis. This Nitratidesulfovibrio vulgaris (strain DP4) (Desulfovibrio vulgaris) protein is 4-hydroxy-3-methylbut-2-enyl diphosphate reductase.